The sequence spans 256 residues: Flap endonuclease Xni (256 aa).

Aspartate 105 contributes to the Mg(2+) binding site. The region spanning 163–256 (RSQLIDYLAL…QFRIKKPDSE (94 aa)) is the 5'-3' exonuclease domain. Positions 172, 173, 181, 183, and 186 each coordinate K(+). The interval 185–190 (GIGPKS) is interaction with DNA.

This sequence belongs to the Xni family. Mg(2+) serves as cofactor. The cofactor is K(+).

Its function is as follows. Has flap endonuclease activity. During DNA replication, flap endonucleases cleave the 5'-overhanging flap structure that is generated by displacement synthesis when DNA polymerase encounters the 5'-end of a downstream Okazaki fragment. In Shewanella pealeana (strain ATCC 700345 / ANG-SQ1), this protein is Flap endonuclease Xni.